The following is a 324-amino-acid chain: Putative transport protein TM_1187 (324 aa).

8 helical membrane passes run 12-32 (LYLV…TALI), 62-82 (ISNV…FPVI), 105-125 (IPGW…EGAL), 131-151 (IVGY…TAFI), 190-210 (GGQV…AFIF), 227-247 (FVPY…AFSV), 252-272 (GLLI…WVLA), and 285-305 (FIIL…GVLI).

Belongs to the autoinducer-2 exporter (AI-2E) (TC 2.A.86) family.

Its subcellular location is the cell membrane. This chain is Putative transport protein TM_1187, found in Thermotoga maritima (strain ATCC 43589 / DSM 3109 / JCM 10099 / NBRC 100826 / MSB8).